The following is a 227-amino-acid chain: MTDLSPVLTIDGPSGAGKGTVSRIVAARLGWHYLDSGALYRAVGVAASWADLDVSDPAALVRCTFDTRVEFDDAGEAGLRVLVNGADATSELRLETTGALASAIAAIPEVRSALKERQRAFRRAPGLVADGRDMGTVIFPDAAYKVFLTASAEERAGRRHKQLMEKGVSVIFDDLLREIMARDARDAQRVVAPLRPAEDAVLIDTSGMGIEDVVQRVVGLLADRAPL.

ATP is bound at residue 12-20 (GPSGAGKGT).

Belongs to the cytidylate kinase family. Type 1 subfamily.

Its subcellular location is the cytoplasm. The catalysed reaction is CMP + ATP = CDP + ADP. The enzyme catalyses dCMP + ATP = dCDP + ADP. The chain is Cytidylate kinase from Xanthomonas euvesicatoria pv. vesicatoria (strain 85-10) (Xanthomonas campestris pv. vesicatoria).